Here is an 89-residue protein sequence, read N- to C-terminus: Small ribosomal subunit protein uS15 (89 aa).

It belongs to the universal ribosomal protein uS15 family. In terms of assembly, part of the 30S ribosomal subunit. Forms a bridge to the 50S subunit in the 70S ribosome, contacting the 23S rRNA.

Its function is as follows. One of the primary rRNA binding proteins, it binds directly to 16S rRNA where it helps nucleate assembly of the platform of the 30S subunit by binding and bridging several RNA helices of the 16S rRNA. Functionally, forms an intersubunit bridge (bridge B4) with the 23S rRNA of the 50S subunit in the ribosome. This chain is Small ribosomal subunit protein uS15, found in Bradyrhizobium sp. (strain BTAi1 / ATCC BAA-1182).